The following is a 156-amino-acid chain: 6,7-dimethyl-8-ribityllumazine synthase (156 aa).

5-amino-6-(D-ribitylamino)uracil is bound by residues Phe-24, 56 to 58 (SFE), and 80 to 82 (AVV). 85–86 (ET) provides a ligand contact to (2S)-2-hydroxy-3-oxobutyl phosphate. The Proton donor role is filled by His-88. Phe-113 is a binding site for 5-amino-6-(D-ribitylamino)uracil. Arg-127 is a (2S)-2-hydroxy-3-oxobutyl phosphate binding site.

Belongs to the DMRL synthase family.

The catalysed reaction is (2S)-2-hydroxy-3-oxobutyl phosphate + 5-amino-6-(D-ribitylamino)uracil = 6,7-dimethyl-8-(1-D-ribityl)lumazine + phosphate + 2 H2O + H(+). The protein operates within cofactor biosynthesis; riboflavin biosynthesis; riboflavin from 2-hydroxy-3-oxobutyl phosphate and 5-amino-6-(D-ribitylamino)uracil: step 1/2. Functionally, catalyzes the formation of 6,7-dimethyl-8-ribityllumazine by condensation of 5-amino-6-(D-ribitylamino)uracil with 3,4-dihydroxy-2-butanone 4-phosphate. This is the penultimate step in the biosynthesis of riboflavin. The chain is 6,7-dimethyl-8-ribityllumazine synthase from Thermococcus kodakarensis (strain ATCC BAA-918 / JCM 12380 / KOD1) (Pyrococcus kodakaraensis (strain KOD1)).